We begin with the raw amino-acid sequence, 122 residues long: Small ribosomal subunit protein bS6 (122 aa).

Residues 96 to 122 (ETAPSPMMKAVQKEDAAKSHRTEAPAA) form a disordered region. Over residues 106–122 (VQKEDAAKSHRTEAPAA) the composition is skewed to basic and acidic residues.

This sequence belongs to the bacterial ribosomal protein bS6 family.

In terms of biological role, binds together with bS18 to 16S ribosomal RNA. The sequence is that of Small ribosomal subunit protein bS6 from Herminiimonas arsenicoxydans.